A 643-amino-acid chain; its full sequence is Sodium-dependent nutrient amino acid transporter 1 (643 aa).

A disordered region spans residues 1 to 38 (MELKGVQPSNGSPNGNGNGATNAASTEKTDAEKPTAER). At 1 to 40 (MELKGVQPSNGSPNGNGNGATNAASTEKTDAEKPTAERTN) the chain is on the cytoplasmic side. Residues 8–26 (PSNGSPNGNGNGATNAAST) show a composition bias toward low complexity. The segment covering 27–36 (EKTDAEKPTA) has biased composition (basic and acidic residues). A run of 3 helical transmembrane segments spans residues 41 to 61 (WGNG…LGNV), 74 to 94 (GAFL…MYYL), and 111 to 131 (SVVP…ICII). N-linked (GlcNAc...) asparagine glycosylation is found at Asn185, Asn190, and Asn200. A run of 9 helical transmembrane segments spans residues 231–251 (PDWK…LVIM), 260–280 (AAYF…IRAV), 309–329 (AVVQ…MFAS), 343–363 (IVTT…FAIL), 403–423 (LFSV…IVAL), 449–469 (VCGF…ILTL), 476–496 (TYVV…VYGL), 518–538 (CWSF…MATI), and 554–574 (VAGW…GLWY).

Belongs to the sodium:neurotransmitter symporter (SNF) (TC 2.A.22) family.

It localises to the membrane. In terms of biological role, unusual broad substrate spectrum amino acid:sodium cotransporter that promotes absorption of the D isomers of essential amino acids. Neutral amino acids are the preferred substrates, especially methionine and phenylalanine. The polypeptide is Sodium-dependent nutrient amino acid transporter 1 (Drosophila simulans (Fruit fly)).